Consider the following 440-residue polypeptide: Oligodendrocyte-myelin glycoprotein (440 aa).

Residues 1–24 (MEYQILKMSLCLFILLFLTPGILC) form the signal peptide. Positions 25–55 (ICPLQCICTERHRHVDCSGRNLSTLPSGLQE) constitute an LRRNT domain. 2 N-linked (GlcNAc...) asparagine glycosylation sites follow: asparagine 45 and asparagine 61. LRR repeat units lie at residues 56–77 (NIIHLNLSYNHFTDLHNQLTQY), 79–100 (NLRTLDISNNRLESLPAHLPRS), 101–121 (LWNMSAANNNIKLLDKSDTAY), 124–145 (NLKYLDVSKNMLEKVVLIKNTL), 147–168 (SLEVLNLSSNKLWTVPTNMPSK), 169–189 (LHIVDLSNNSLTQILPGTLIN), 192–213 (NLTHLYLHNNKFTFIPDQSFDQ), and 216–239 (QLQEITLYNNRWSCDHKQNITYLL). Asparagine 103 is a glycosylation site (N-linked (GlcNAc...) asparagine). 5 N-linked (GlcNAc...) asparagine glycosylation sites follow: asparagine 152, asparagine 176, asparagine 189, asparagine 192, and asparagine 234. 5 Ser/Thr-rich repeats span residues 229-270 (CDHK…YPTP), 271-292 (SGFTSSLFTVSGMQTVDTINSL), 293-335 (SVVT…VPYP), 336-377 (EDTS…SPTP), and 378-416 (MTLSITSGMPNNFSEMPQQSTTLNLWREETTTNVKTPLP). N-linked (GlcNAc...) asparagine glycosylation is found at asparagine 364 and asparagine 389. A lipid anchor (GPI-anchor amidated serine) is attached at serine 417. Positions 418-440 (VANAWKVNASFLLLLNVVVMLAV) are cleaved as a propeptide — removed in mature form. Residue asparagine 425 is glycosylated (N-linked (GlcNAc...) asparagine).

As to quaternary structure, binds to RTN4R. O-glycosylated in its Ser/Thr-rich repeat domain. As to expression, oligodendrocytes and myelin of the central nervous system.

It is found in the cell membrane. Its function is as follows. Cell adhesion molecule contributing to the interactive process required for myelination in the central nervous system. This chain is Oligodendrocyte-myelin glycoprotein (OMG), found in Homo sapiens (Human).